A 291-amino-acid polypeptide reads, in one-letter code: Beta-lactamase CTX-M-15 (291 aa).

The first 28 residues, 1 to 28 (MVKKSLRQFTLMATATVTLLLGSVPLYA), serve as a signal peptide directing secretion. Serine 73 serves as the catalytic Nucleophile; acyl-ester intermediate. A beta-lactam contacts are provided by lysine 76, serine 133, glutamate 169, and serine 240.

Belongs to the class-A beta-lactamase family. As to quaternary structure, monomer.

It is found in the secreted. The enzyme catalyses a beta-lactam + H2O = a substituted beta-amino acid. Inhibited by the beta-lactamase-blocking agents clavulanic acid and avibactam, via a covalent binding to Ser-73. Extended-spectrum beta-lactamase (ESBL) which confers resistance to penicillins, as well as first, second, third and fourth-generation cephalosporins. Has cefotaxime- and ceftazidime-hydrolyzing activity. Inactive against the carbapenem antibiotics, imipenem, meropenem and ertapenem. In Escherichia coli O25b:H4, this protein is Beta-lactamase CTX-M-15.